We begin with the raw amino-acid sequence, 390 residues long: Putative methylesterase 11, chloroplastic (390 aa).

A chloroplast-targeting transit peptide spans 1–46 (MGNLCSLFTPPKPVKKRKPITKRQSSIGASSSGSGLNSNRWNNRVR). Disordered stretches follow at residues 1–52 (MGNL…SSRR) and 94–119 (QGSC…DPLL). Positions 25–48 (SSIGASSSGSGLNSNRWNNRVRSS) are enriched in low complexity. The span at 94-104 (QGSCSKKNQLP) shows a compositional bias: polar residues. Residues 105–114 (RSSSSRSRSS) show a composition bias toward low complexity. Positions 137 to 241 (NHFVLVHGGS…KAVFLAAAML (105 aa)) constitute an AB hydrolase-1 domain. D213 acts as the Acyl-ester intermediate in catalysis. Catalysis depends on charge relay system residues D339 and H367.

This sequence belongs to the AB hydrolase superfamily. Methylesterase family.

The protein localises to the plastid. Its subcellular location is the chloroplast. In terms of biological role, putative methylesterase. This chain is Putative methylesterase 11, chloroplastic, found in Arabidopsis thaliana (Mouse-ear cress).